Here is a 639-residue protein sequence, read N- to C-terminus: Chaperone protein HtpG (639 aa).

The segment at 1-348 (MAQYEFQTEV…SEDLPLNVSR (348 aa)) is a; substrate-binding. The b stretch occupies residues 349 to 565 (EILQQNRVLA…ENDPTVQMER (217 aa)). Residues 566–639 (LMRATGQTHK…KRVNRLLARG (74 aa)) are c.

The protein belongs to the heat shock protein 90 family. As to quaternary structure, homodimer.

It localises to the cytoplasm. Functionally, molecular chaperone. Has ATPase activity. The protein is Chaperone protein HtpG of Treponema pallidum (strain Nichols).